Consider the following 823-residue polypeptide: Leucine--tRNA ligase (823 aa).

A 'HIGH' region motif is present at residues 42 to 52 (PYPSGTLHMGH). A 'KMSKS' region motif is present at residues 575-579 (KMSKS). Lysine 578 provides a ligand contact to ATP.

Belongs to the class-I aminoacyl-tRNA synthetase family.

The protein resides in the cytoplasm. The catalysed reaction is tRNA(Leu) + L-leucine + ATP = L-leucyl-tRNA(Leu) + AMP + diphosphate. This Legionella pneumophila (strain Corby) protein is Leucine--tRNA ligase.